The sequence spans 516 residues: Exodeoxyribonuclease 7 large subunit (516 aa).

The protein belongs to the XseA family. In terms of assembly, heterooligomer composed of large and small subunits.

It is found in the cytoplasm. It carries out the reaction Exonucleolytic cleavage in either 5'- to 3'- or 3'- to 5'-direction to yield nucleoside 5'-phosphates.. In terms of biological role, bidirectionally degrades single-stranded DNA into large acid-insoluble oligonucleotides, which are then degraded further into small acid-soluble oligonucleotides. This Chlamydia trachomatis serovar L2 (strain ATCC VR-902B / DSM 19102 / 434/Bu) protein is Exodeoxyribonuclease 7 large subunit.